The chain runs to 157 residues: DNA gyrase inhibitor (157 aa).

Belongs to the DNA gyrase inhibitor family. Interacts with DNA gyrase.

The protein resides in the cytoplasm. Inhibits the supercoiling activity of DNA gyrase. Acts by inhibiting DNA gyrase at an early step, prior to (or at the step of) binding of DNA by the gyrase. It protects cells against toxins that target DNA gyrase, by inhibiting activity of these toxins and reducing the formation of lethal double-strand breaks in the cell. The chain is DNA gyrase inhibitor from Enterobacter lignolyticus (strain SCF1).